Consider the following 634-residue polypeptide: Kelch-like protein 22 (634 aa).

A2 carries the N-acetylalanine modification. The BTB domain maps to 50–117; the sequence is FDVVLVVEGK…IYTSELELSL (68 aa). Kelch repeat units lie at residues 299-349, 350-399, 400-446, 448-493, 495-544, and 545-593; these read CVVG…VLNN, FVYL…VVGK, YIYA…TLQG, MYIT…ALLD, LFVI…VLDS, and RIYV…VLTL. T463 bears the Phosphothreonine mark. Residue Y466 is modified to Phosphotyrosine. Position 475 is a phosphothreonine (T475). Residues 600–634 are disordered; sequence EQPRGTPNRSQADADFASEVMSVSDWEEFDNSSED. T605 bears the Phosphothreonine mark. The span at 624-634 shows a compositional bias: acidic residues; sequence DWEEFDNSSED.

In terms of assembly, component of the BCR(KLHL22) E3 ubiquitin ligase complex, at least composed of CUL3, KLHL22 and RBX1. Interacts with PLK1. Interacts with DEPDC5 (via DEP domain); the interaction depends on amino acid availability. Interacts with YWHAE; required for the nuclear localization of KLHL22 upon amino acid starvation.

The protein resides in the cytoplasm. Its subcellular location is the cytosol. It is found in the cytoskeleton. It localises to the microtubule organizing center. The protein localises to the centrosome. The protein resides in the spindle. Its subcellular location is the nucleus. It is found in the lysosome. It functions in the pathway protein modification; protein ubiquitination. In terms of biological role, substrate-specific adapter of a BCR (BTB-CUL3-RBX1) E3 ubiquitin ligase complex required for chromosome alignment and localization of PLK1 at kinetochores. The BCR(KLHL22) ubiquitin ligase complex mediates monoubiquitination of PLK1, leading to PLK1 dissociation from phosphoreceptor proteins and subsequent removal from kinetochores, allowing silencing of the spindle assembly checkpoint (SAC) and chromosome segregation. Monoubiquitination of PLK1 does not lead to PLK1 degradation. The BCR(KLHL22) ubiquitin ligase complex is also responsible for the amino acid-stimulated 'Lys-48' polyubiquitination and proteasomal degradation of DEPDC5. Through the degradation of DEPDC5, releases the GATOR1 complex-mediated inhibition of the TORC1 pathway. It is therefore an amino acid-dependent activator within the amino acid-sensing branch of the TORC1 pathway, indirectly regulating different cellular processes including cell growth and autophagy. The polypeptide is Kelch-like protein 22 (Mus musculus (Mouse)).